A 66-amino-acid chain; its full sequence is uncharacterized protein (66 aa).

This is an uncharacterized protein from Archaeoglobus fulgidus (strain ATCC 49558 / DSM 4304 / JCM 9628 / NBRC 100126 / VC-16).